The chain runs to 118 residues: D-dopachrome decarboxylase (118 aa).

P2 is subject to N-acetylproline.

Belongs to the MIF family. Homotrimer.

It is found in the cytoplasm. It catalyses the reaction D-dopachrome + H(+) = 5,6-dihydroxyindole + CO2. Its function is as follows. Tautomerization of D-dopachrome with decarboxylation to give 5,6-dihydroxyindole (DHI). The polypeptide is D-dopachrome decarboxylase (DDT) (Gallus gallus (Chicken)).